A 522-amino-acid chain; its full sequence is DNA damage-binding protein CMR1 (522 aa).

The interval 38–100 is disordered; it reads AGVLEKSRAP…DNQLLKMGSP (63 aa). Over residues 54-63 the composition is skewed to polar residues; sequence TTNTRATKSA. Residue serine 64 is modified to Phosphoserine. Threonine 69 bears the Phosphothreonine mark. Basic and acidic residues predominate over residues 75-84; it reads LRGESADDVK. 7 WD repeats span residues 183-224, 239-281, 287-327, 331-371, 388-427, 442-481, and 482-521; these read ITYE…LADS, LFTK…EVLT, DDSL…SEYN, LADK…KKPE, DSRL…HLSA, GRWT…LAHL, and PTAT…IKQE. Serine 224 carries the phosphoserine modification.

The protein belongs to the WD repeat DDB2/WDR76 family.

Its subcellular location is the cytoplasm. It localises to the nucleus. Its function is as follows. DNA-binding protein that binds to both single- and double-stranded DNA. Binds preferentially to UV-damaged DNA in vitro. May be involved in DNA-metabolic processes. This Saccharomyces cerevisiae (strain ATCC 204508 / S288c) (Baker's yeast) protein is DNA damage-binding protein CMR1.